The chain runs to 655 residues: Bifunctional lysine-specific demethylase and histidyl-hydroxylase NO66 (655 aa).

Polar residues predominate over residues 1–16; that stretch reads MEKVTNSAAAKPQGNN. Disordered stretches follow at residues 1 to 48 and 67 to 122; these read MEKV…LSDM and EDTD…QGAS. A compositionally biased stretch (low complexity) spans 76 to 86; it reads STSSKEAAAAK. The segment covering 87 to 96 has biased composition (basic and acidic residues); the sequence is TADHERRLQA. The residue at position 131 (Ser131) is a Phosphoserine. Thr137 is subject to Phosphothreonine. Position 138 is a phosphoserine (Ser138). The interval 185 to 210 is disordered; that stretch reads KAPEEGNNNNDEKEMSTETSEPHKTD. Positions 194–210 are enriched in basic and acidic residues; it reads NDEKEMSTETSEPHKTD. A JmjC domain is found at 307–452; it reads CSIRLLHASA…NLLETLMPMV (146 aa). His353, Asp355, and His418 together coordinate Fe cation.

The protein belongs to the ROX family. NO66 subfamily. The cofactor is Fe(2+).

The protein localises to the nucleus. It catalyses the reaction N(6),N(6)-dimethyl-L-lysyl(36)-[histone H3] + 2 2-oxoglutarate + 2 O2 = L-lysyl(36)-[histone H3] + 2 formaldehyde + 2 succinate + 2 CO2. Its function is as follows. Oxygenase that can act as both a histone lysine demethylase and a ribosomal histidine hydroxylase. Specifically demethylates 'Lys-4' (H3K4me) and 'Lys-36' (H3K36me) of histone H3, thereby playing a central role in histone code. This Drosophila sechellia (Fruit fly) protein is Bifunctional lysine-specific demethylase and histidyl-hydroxylase NO66.